Consider the following 425-residue polypeptide: MAGCVSQAAPSEPWLQNVSIVGVKQIDRIVEVVGETLKGNKVRLLTRNRPDAVLSLPKMRKNELIEVLSISTGCLNNCTYCKTKMARGDLVSYPLADLVEQARAAFHDEGVKELWLTSEDLGAWGRDIGLVLPDLLRELVKVIPDGSMMRLGMTNPPYILDHLEEIAEILNHPKVYAFLHIPVQSASDAVLNDMKREYSRRHFEQIADYMIANVPNIYIATDMILAFPTETLEDFEESMELVRKYKFPSLFINQYYPRSGTPAARLKKIDTVEARKRTAAMSELFRSYTRYTDERIGELHRVLVTEVAADKLHGVGHNKSYEQILVPLEYCKMGEWIEVRVTAVTKFSMISKPASIQEDQQPLSLMHLFPLAVFCLVLITLYSVDRFLYPGFFEEWLPFLADAHHDEQQAEMWEHHDNSDPVFYE.

One can recognise a Radical SAM core domain in the interval 60 to 295; sequence RKNELIEVLS…RSYTRYTDER (236 aa). [4Fe-4S] cluster-binding residues include cysteine 74, cysteine 78, and cysteine 81. Positions 293–355 constitute a TRAM domain; sequence DERIGELHRV…KFSMISKPAS (63 aa). Residues 362 to 382 traverse the membrane as a helical segment; sequence PLSLMHLFPLAVFCLVLITLY.

This sequence belongs to the methylthiotransferase family. CDKAL1 subfamily. Requires [4Fe-4S] cluster as cofactor.

It localises to the membrane. It catalyses the reaction N(6)-L-threonylcarbamoyladenosine(37) in tRNA + (sulfur carrier)-SH + AH2 + 2 S-adenosyl-L-methionine = 2-methylsulfanyl-N(6)-L-threonylcarbamoyladenosine(37) in tRNA + (sulfur carrier)-H + 5'-deoxyadenosine + L-methionine + A + S-adenosyl-L-homocysteine + 2 H(+). Functionally, catalyzes the methylthiolation of N6-threonylcarbamoyladenosine (t(6)A), leading to the formation of 2-methylthio-N6-threonylcarbamoyladenosine (ms(2)t(6)A) at position 37 in tRNAs that read codons beginning with adenine. This is Threonylcarbamoyladenosine tRNA methylthiotransferase from Caenorhabditis elegans.